A 599-amino-acid polypeptide reads, in one-letter code: Crinkler effector protein 8 (599 aa).

Positions 1–17 (MVTLFCAVVGVAGSTFP) are cleaved as a signal peptide. The segment at 18–52 (VDINENKSVGHLKKAIKEEKMYQFPADELQLFLAK) is LQLFLAK domain. N-linked (GlcNAc...) asparagine glycosylation occurs at Asn23. The interval 53–109 (AGGNAWLSSLTEDVKKLKKGEKTALVKSLTQEEKELQGEDPISECLEGMDPPKVKQI) is DWL domain. An HVLVXXP motif motif is present at residues 110–116 (HVLVALP). The segment at 117 to 590 (PGTSSAPISD…EAAEQESQGK (474 aa)) is C-terminal D2 effector domain. Phosphoserine is present on residues Ser249, Ser281, and Ser385. The Protein kinase domain occupies 289 to 590 (LSKKLVWSYG…EAAEQESQGK (302 aa)). The active-site Proton acceptor is Asp470. Phosphoserine occurs at positions 474 and 587. Residues 577 to 599 (RFEREAAEQESQGKGVRKKHRRA) are disordered. The short motif at 590 to 599 (KGVRKKHRRA) is the Host nuclear localization signal element.

The protein in the N-terminal section; belongs to the Crinkler effector family. This sequence in the C-terminal section; belongs to the protein kinase superfamily. In terms of assembly, dimerizes in host plants. Post-translationally, autophosphorylated at Ser-249, Ser-281, Ser-385, Ser-474 and Ser-587. Additional serines or threonines are also targeted for phosphorylation.

Its subcellular location is the secreted. The protein localises to the host nucleus. It carries out the reaction L-seryl-[protein] + ATP = O-phospho-L-seryl-[protein] + ADP + H(+). The enzyme catalyses L-threonyl-[protein] + ATP = O-phospho-L-threonyl-[protein] + ADP + H(+). Secreted effector that induces cell death when expressed in host plants. Acts as a kinase and is able to autophosphorylate, however its cell death inducing ability is not a direct result of its kinase activity, but rather a consequence of the phosphorylated state of the five identified serine residues in the CRN8 protein. This Phytophthora infestans (Potato late blight agent) protein is Crinkler effector protein 8.